The following is a 308-amino-acid chain: N-acetylgalactosamine kinase AgaK (308 aa).

ATP-binding positions include 4-11 and 132-139; these read GLDIGGTK and GTGGGLCI. His156, Cys174, Cys176, and Cys181 together coordinate Zn(2+).

It belongs to the ROK (NagC/XylR) family.

Its subcellular location is the cytoplasm. It catalyses the reaction N-acetyl-D-galactosamine + ATP = N-acetyl-D-galactosamine 6-phosphate + ADP + H(+). The enzyme catalyses N-acetyl-D-glucosamine + ATP = N-acetyl-D-glucosamine 6-phosphate + ADP + H(+). Functionally, involved in the pathway of N-acetyl-D-galactosamine degradation. Catalyzes the phosphorylation of N-acetyl-D-galactosamine (GalNAc) to yield D-galactosamine 6-phosphate (GalN-6-P). It can also phosphorylate N-acetylglucosamine (GlcNAc). This Shewanella sp. (strain ANA-3) protein is N-acetylgalactosamine kinase AgaK.